The sequence spans 340 residues: Ras association domain-containing protein 1 (340 aa).

N-acetylserine is present on Ser-2. Ser-2 carries the phosphoserine modification. The tract at residues 2–115 (SAEPELIELR…DLGWDSALER (114 aa)) is mediates interaction with E4F1. The Phorbol-ester/DAG-type zinc finger occupies 51 to 101 (GHRFQPAGPTTHTWCDLCGDFIWGVVRKGLQCAHCKFTCHYRCRALVCLDC). Low complexity predominate over residues 175-185 (SVPSSKKPPSL). The interval 175-196 (SVPSSKKPPSLQDARRGTGRST) is disordered. In terms of domain architecture, Ras-associating spans 194-288 (RSTAVKRRTS…LSFVLKENDS (95 aa)). Residues 290-337 (EVNWDAFSMPELHNFLRILQREEEEHLRQILQKYSRCRQKIQEALHAC) form the SARAH domain. The tract at residues 311 to 314 (EEEE) is MOAP1-binding.

As to quaternary structure, interacts with MAP1S and XPA. Binds to the N-terminal of CDC20 during prometaphase. Binds to STK3/MST2 and STK4/MST1. Recruited to the TNFRSF1A and TNFRSF10A complexes in response to their respective cognate ligand, after internalization. Can self-associate. Part of a complex with MDM2, DAXX, RASSF1 and USP7. Interacts with MOAP1 and E4F1. Interacts with RSSF5 and probably associates with HRAS via a RSSF1 isoform A-RSSF5 heterodimer. Interacts (via C-terminus) with DAXX (via N-terminus); the interaction is independent of MDM2 and TP53. Interacts (via N-terminus) with MDM2 (via C-terminus); the interaction is independent of TP53. Interacts with RAB39A. Interacts with RAB39B; the interaction is weak. In terms of assembly, interacts with ECM2. Interacts with RAB39B; the interaction is strong. Does not interact with RAB39A.

Its subcellular location is the cytoplasm. The protein resides in the cytoskeleton. The protein localises to the microtubule organizing center. It is found in the centrosome. It localises to the spindle. Its subcellular location is the spindle pole. The protein resides in the nucleus. In terms of biological role, potential tumor suppressor. Required for death receptor-dependent apoptosis. Mediates activation of Mediates activation of STK3/MST2 and STK4/MST1 during Fas-induced apoptosis by preventing their dephosphorylation. When associated with MOAP1, promotes BAX conformational change and translocation to mitochondrial membranes in response to TNF and TNFSF10 stimulation. Isoform A interacts with CDC20, an activator of the anaphase-promoting complex, APC, resulting in the inhibition of APC activity and mitotic progression. Inhibits proliferation by negatively regulating cell cycle progression at the level of G1/S-phase transition by regulating accumulation of cyclin D1 protein. Isoform C has been shown not to perform these roles, no function has been identified for this isoform. Isoform A disrupts interactions among MDM2, DAXX and USP7, thus contributing to the efficient activation of TP53 by promoting MDM2 self-ubiquitination in cell-cycle checkpoint control in response to DNA damage. This chain is Ras association domain-containing protein 1, found in Mus musculus (Mouse).